The primary structure comprises 359 residues: Cytokine receptor-like factor 2 (359 aa).

An N-terminal signal peptide occupies residues 1-19; sequence MAWALAVILLPRLLAAAAA. The Extracellular portion of the chain corresponds to 20–232; it reads AAAVTSRGDV…PAPSPALAPP (213 aa). Residue Asn-53 is glycosylated (N-linked (GlcNAc...) asparagine). Residues Cys-68 and Cys-82 are joined by a disulfide bond. The region spanning 119 to 213 is the Fibronectin type-III domain; that stretch reads PPWNVTLLWT…WTAVTRLSGA (95 aa). The N-linked (GlcNAc...) asparagine glycan is linked to Asn-122. 2 disulfides stabilise this stretch: Cys-168-Cys-169 and Cys-181-Cys-219. Residues 201–205 carry the WSXWS motif motif; the sequence is PSEWT. Residues 233–253 form a helical membrane-spanning segment; sequence LLPLGCGLAALLTLSLLLAAL. The Cytoplasmic segment spans residues 254–359; sequence RLRRVKDALL…MVGDSGYMTL (106 aa). Positions 262-270 match the Box 1 motif motif; the sequence is LLPCVPDPS. A disordered region spans residues 312–336; that stretch reads KRVEPEDGTSLCTVPRPPSFEPRGP.

Belongs to the type I cytokine receptor family. Type 5 subfamily. The TSLP receptor is a heterodimer of CRLF2 and IL7R. Binding of TSLP to CRLF2/TSLPR is a mechanistic prerequisite for recruitment of IL7R to the high-affinity ternary complex. High level of expression in liver, lung and testis. Also expressed in heart, brain, spleen, thymus and bone marrow. Highly expressed in progenitors and myeloid cells. Isoform 2 is expressed in primary hemotopoietic cells.

It localises to the cell membrane. The protein localises to the secreted. Receptor for thymic stromal lymphopoietin (TSLP). Forms a functional complex with TSLP and IL7R which is capable of stimulating cell proliferation through activation of STAT3 and STAT5. Also activates JAK2. Implicated in the development of the hematopoietic system. This Mus musculus (Mouse) protein is Cytokine receptor-like factor 2 (Crlf2).